The sequence spans 372 residues: Protein phosphatase Mn(2+)-dependent 1K (372 aa).

The N-terminal 29 residues, 1–29, are a transit peptide targeting the mitochondrion; that stretch reads MSTAALITLVRSGGNQVRRRVLLSSRLLQ. The interval 34–55 is disordered; sequence VTPTCHSSTSEPRCSRFDPDGS. The tract at residues 46 to 61 is critical for association with the BCKDH complex; the sequence is RCSRFDPDGSGSPATW. The 253-residue stretch at 94–346 folds into the PPM-type phosphatase domain; it reads NVGCASQIGK…DNSTAVVVPF (253 aa). Mn(2+) contacts are provided by D127 and G128. Residue S248 is modified to Phosphoserine. 2 residues coordinate Mn(2+): D298 and D337.

This sequence belongs to the PP2C family. As to quaternary structure, monomer. Interacts with E1 and E2 components of the branched-chain alpha-ketoacid dehydrogenase (BCKDH) complex; this interaction requires colocalization in mitochondria. Interacts with BCKDHA but not with BCKDHB of the E1 component. Interacts with the 24-meric E2 core composed of DBT monomers with a 24:1 stoichiometry; the N-terminal region (residues 49-61) of PPM1K and C-terminal linker of the lipoyl domain of DBT (residues 145-160) are critical for this interaction, whereas the lipoyl prosthetic group is dispensable. Competes with BCKDK for binding to the E2 core; this interaction is modulated by branched-chain alpha-keto acids. At steady state, BCKDH holoenzyme preferentially binds BCKDK and BCKDHA is phosphorylated. In response to high levels of branched-chain alpha-keto acids, the inhibitory BCKDK is replaced by activating PPM1K leading to BCKDHA dephosphorylation and BCAA degradation. Mn(2+) serves as cofactor.

It is found in the mitochondrion matrix. The catalysed reaction is O-phospho-L-seryl-[3-methyl-2-oxobutanoate dehydrogenase] + H2O = L-seryl-[3-methyl-2-oxobutanoate dehydrogenase] + phosphate. The enzyme catalyses O-phospho-L-seryl-[protein] + H2O = L-seryl-[protein] + phosphate. Its pathway is protein modification. Its activity is regulated as follows. Up-regulated upon interaction with the 24-meric DBT/E2 core of the BCKDH complex. Inhibited by Mg(2+) and Ca(2+) ions likely by competing with Mn(2+) ions for binding to the same metal-binding sites. Serine/threonine-protein phosphatase component of macronutrients metabolism. Forms a functional kinase and phosphatase pair with BCKDK, serving as a metabolic regulatory node that coordinates branched-chain amino acids (BCAAs) with glucose and lipid metabolism via two distinct phosphoprotein targets: mitochondrial BCKDHA subunit of the branched-chain alpha-ketoacid dehydrogenase (BCKDH) complex and cytosolic ACLY, a lipogenic enzyme of Krebs cycle. At high levels of branched-chain ketoacids, dephosphorylates and activates mitochondrial BCKDH complex, a multisubunit complex consisting of three multimeric components each involved in different steps of BCAA catabolism: E1 composed of BCKDHA and BCKDHB, E2 core composed of DBT monomers, and E3 composed of DLD monomers. Tightly associates with the E2 component of BCKDH complex and dephosphorylates BCKDHA on Ser-337. Regulates the reversible phosphorylation of ACLY in response to changes in cellular carbohydrate abundance such as occurs during fasting to feeding metabolic transition. At fasting state, appears to dephosphorylate ACLY on Ser-455 and inactivate it. Refeeding stimulates MLXIPL/ChREBP transcription factor, leading to increased BCKDK to PPM1K expression ratio, phosphorylation and activation of ACLY that ultimately results in the generation of malonyl-CoA and oxaloacetate immediate substrates of de novo lipogenesis and gluconeogenesis, respectively. Recognizes phosphosites having SxS or RxxS motifs and strictly depends on Mn(2+) ions for the phosphatase activity. Regulates Ca(2+)-induced opening of mitochondrial transition pore and apoptotic cell death. The sequence is that of Protein phosphatase Mn(2+)-dependent 1K from Homo sapiens (Human).